The sequence spans 107 residues: Replication initiation control protein YabA (107 aa).

The Zn(2+) site is built by histidine 81, cysteine 83, cysteine 97, and cysteine 100.

The protein belongs to the YabA family. In terms of assembly, homotetramer. Interacts with both DnaA and DnaN, acting as a bridge between these two proteins. Zn(2+) is required as a cofactor.

It localises to the cytoplasm. Its subcellular location is the nucleoid. Its function is as follows. Involved in control of chromosome replication initiation. Inhibits the cooperative binding of DnaA to the oriC region, thus negatively regulating initiation of chromosome replication. Inhibits the ability of DnaA-ATP to form a helix on DNA; does not disassemble preformed DnaA-DNA helices. Decreases the residence time of DnaA on the chromosome at its binding sites (oriC, replication forks and promoter-binding sites). Tethers DnaA to the replication machinery via the DNA polymerase beta sliding clamp subunit (dnaN). Associates with oriC and other DnaA targets on the chromosome in a DnaA-dependent manner. The protein is Replication initiation control protein YabA of Streptococcus pyogenes serotype M1.